The primary structure comprises 105 residues: Protein ORFg in retron Ec67 (105 aa).

The protein is Protein ORFg in retron Ec67 of Escherichia coli.